A 272-amino-acid chain; its full sequence is Alpha-tubulin N-acetyltransferase (272 aa).

The 186-residue stretch at 1–186 (MEFRFNCHPL…NNFVVYEGFF (186 aa)) folds into the N-acetyltransferase domain. Acetyl-CoA contacts are provided by residues 120–133 (FYVH…GLGR) and 156–165 (SEKLLGFLQK). The tract at residues 216-244 (TTVGEQRRSSSQTRQQVVSPPVVQQPPVG) is disordered. Low complexity predominate over residues 224–244 (SSSQTRQQVVSPPVVQQPPVG).

This sequence belongs to the acetyltransferase ATAT1 family.

The catalysed reaction is L-lysyl-[alpha-tubulin] + acetyl-CoA = N(6)-acetyl-L-lysyl-[alpha-tubulin] + CoA + H(+). In terms of biological role, specifically acetylates 'Lys-40' in alpha-tubulin on the lumenal side of microtubules. Promotes microtubule destabilization and accelerates microtubule dynamics; this activity may be independent of acetylation activity. Acetylates alpha-tubulin with a slow enzymatic rate, due to a catalytic site that is not optimized for acetyl transfer. Enters the microtubule through each end and diffuses quickly throughout the lumen of microtubules. Acetylates only long/old microtubules because of its slow acetylation rate since it does not have time to act on dynamically unstable microtubules before the enzyme is released. This Aedes aegypti (Yellowfever mosquito) protein is Alpha-tubulin N-acetyltransferase.